Reading from the N-terminus, the 122-residue chain is Large ribosomal subunit protein uL14 (122 aa).

The protein belongs to the universal ribosomal protein uL14 family. Part of the 50S ribosomal subunit. Forms a cluster with proteins L3 and L19. In the 70S ribosome, L14 and L19 interact and together make contacts with the 16S rRNA in bridges B5 and B8.

Binds to 23S rRNA. Forms part of two intersubunit bridges in the 70S ribosome. The protein is Large ribosomal subunit protein uL14 of Rickettsia typhi (strain ATCC VR-144 / Wilmington).